The following is a 435-amino-acid chain: Tol-Pal system protein TolB (435 aa).

The signal sequence occupies residues 1–28 (MTKCSFFRAILVAVGLMTAAVFATPANA). The disordered stretch occupies residues 288–310 (STAAIDTSPSYSPDGARVSFESD).

It belongs to the TolB family. The Tol-Pal system is composed of five core proteins: the inner membrane proteins TolA, TolQ and TolR, the periplasmic protein TolB and the outer membrane protein Pal. They form a network linking the inner and outer membranes and the peptidoglycan layer.

The protein localises to the periplasm. Part of the Tol-Pal system, which plays a role in outer membrane invagination during cell division and is important for maintaining outer membrane integrity. This chain is Tol-Pal system protein TolB, found in Rhizobium johnstonii (strain DSM 114642 / LMG 32736 / 3841) (Rhizobium leguminosarum bv. viciae).